The following is a 438-amino-acid chain: 3-phosphoshikimate 1-carboxyvinyltransferase (438 aa).

Positions 26, 27, and 31 each coordinate 3-phosphoshikimate. Residue Lys-26 participates in phosphoenolpyruvate binding. Phosphoenolpyruvate contacts are provided by Gly-99 and Arg-127. 3-phosphoshikimate contacts are provided by Ser-172, Gln-174, Asp-320, and Lys-347. Gln-174 lines the phosphoenolpyruvate pocket. Catalysis depends on Asp-320, which acts as the Proton acceptor. Phosphoenolpyruvate is bound by residues Arg-351 and Arg-392.

This sequence belongs to the EPSP synthase family. In terms of assembly, monomer.

Its subcellular location is the cytoplasm. The enzyme catalyses 3-phosphoshikimate + phosphoenolpyruvate = 5-O-(1-carboxyvinyl)-3-phosphoshikimate + phosphate. The protein operates within metabolic intermediate biosynthesis; chorismate biosynthesis; chorismate from D-erythrose 4-phosphate and phosphoenolpyruvate: step 6/7. In terms of biological role, catalyzes the transfer of the enolpyruvyl moiety of phosphoenolpyruvate (PEP) to the 5-hydroxyl of shikimate-3-phosphate (S3P) to produce enolpyruvyl shikimate-3-phosphate and inorganic phosphate. In Xanthomonas campestris pv. campestris (strain B100), this protein is 3-phosphoshikimate 1-carboxyvinyltransferase.